Consider the following 274-residue polypeptide: SPbeta prophage-derived UPF0714 protein YoqZ (274 aa).

The protein belongs to the UPF0714 family.

In Bacillus subtilis (strain 168), this protein is SPbeta prophage-derived UPF0714 protein YoqZ (yoqZ).